The following is a 427-amino-acid chain: 3-phosphoshikimate 1-carboxyvinyltransferase (427 aa).

Residues lysine 22, serine 23, and arginine 27 each contribute to the 3-phosphoshikimate site. Lysine 22 contributes to the phosphoenolpyruvate binding site. Phosphoenolpyruvate is bound by residues glycine 96 and arginine 124. Residues serine 169, serine 170, glutamine 171, serine 197, aspartate 313, asparagine 336, and lysine 340 each contribute to the 3-phosphoshikimate site. Glutamine 171 lines the phosphoenolpyruvate pocket. The active-site Proton acceptor is aspartate 313. Residues arginine 344, arginine 386, and lysine 411 each contribute to the phosphoenolpyruvate site.

It belongs to the EPSP synthase family. As to quaternary structure, monomer.

The protein localises to the cytoplasm. It catalyses the reaction 3-phosphoshikimate + phosphoenolpyruvate = 5-O-(1-carboxyvinyl)-3-phosphoshikimate + phosphate. It functions in the pathway metabolic intermediate biosynthesis; chorismate biosynthesis; chorismate from D-erythrose 4-phosphate and phosphoenolpyruvate: step 6/7. Catalyzes the transfer of the enolpyruvyl moiety of phosphoenolpyruvate (PEP) to the 5-hydroxyl of shikimate-3-phosphate (S3P) to produce enolpyruvyl shikimate-3-phosphate and inorganic phosphate. This is 3-phosphoshikimate 1-carboxyvinyltransferase from Klebsiella pneumoniae (strain 342).